Here is a 73-residue protein sequence, read N- to C-terminus: Kappa-scoloptoxin(03)-Ssm1c (73 aa).

A signal peptide spans 1–23 (MKSWMAILLVMALIIFTLDNCYS). Disulfide bonds link Cys-32–Cys-58, Cys-41–Cys-57, and Cys-44–Cys-67.

It belongs to the scoloptoxin family. Expressed by the venom gland.

It is found in the secreted. In terms of biological role, inhibits voltage-gated potassium channels. This is Kappa-scoloptoxin(03)-Ssm1c from Scolopendra mutilans (Chinese red-headed centipede).